We begin with the raw amino-acid sequence, 190 residues long: Peptide methionine sulfoxide reductase MsrA (190 aa).

C21 is a catalytic residue.

It belongs to the MsrA Met sulfoxide reductase family.

It catalyses the reaction L-methionyl-[protein] + [thioredoxin]-disulfide + H2O = L-methionyl-(S)-S-oxide-[protein] + [thioredoxin]-dithiol. The catalysed reaction is [thioredoxin]-disulfide + L-methionine + H2O = L-methionine (S)-S-oxide + [thioredoxin]-dithiol. In terms of biological role, has an important function as a repair enzyme for proteins that have been inactivated by oxidation. Catalyzes the reversible oxidation-reduction of methionine sulfoxide in proteins to methionine. This chain is Peptide methionine sulfoxide reductase MsrA, found in Polynucleobacter asymbioticus (strain DSM 18221 / CIP 109841 / QLW-P1DMWA-1) (Polynucleobacter necessarius subsp. asymbioticus).